The sequence spans 516 residues: Coiled-coil domain-containing protein 82 (516 aa).

Over residues 1–13 the composition is skewed to basic residues; it reads MVHARRHETRKNS. A disordered region spans residues 1 to 265; the sequence is MVHARRHETR…DYGDAENEDD (265 aa). The segment covering 38–62 has biased composition (acidic residues); it reads DSDEELDSDEEIGSDEDLDGGESID. Basic and acidic residues predominate over residues 78–96; that stretch reads IPEKETELNLIKVESERSN. The span at 98-107 shows a compositional bias: polar residues; it reads KCHMNTSSSS. Positions 113–135 are enriched in basic and acidic residues; it reads MNKTKHNDLPDDEAHPGQAEGHH. 2 positions are modified to phosphoserine: S170 and S194. A Phosphothreonine modification is found at T202. Positions 204–232 form a coiled coil; it reads EKSPAARKREYHQKLQELCERSRQKQRHN. The segment covering 215-226 has biased composition (basic and acidic residues); that stretch reads HQKLQELCERSR. Positions 248–265 are enriched in acidic residues; that stretch reads TDEDEDDDDYGDAENEDD. Phosphoserine is present on S301.

The protein is Coiled-coil domain-containing protein 82 (Ccdc82) of Rattus norvegicus (Rat).